We begin with the raw amino-acid sequence, 470 residues long: Homogentisate 1,2-dioxygenase (470 aa).

Positions 356, 362, and 392 each coordinate Fe cation.

This sequence belongs to the homogentisate dioxygenase family. Requires Fe cation as cofactor.

It catalyses the reaction homogentisate + O2 = 4-maleylacetoacetate + H(+). Its pathway is amino-acid degradation; L-phenylalanine degradation; acetoacetate and fumarate from L-phenylalanine: step 4/6. The sequence is that of Homogentisate 1,2-dioxygenase (HGO) from Oryza sativa subsp. japonica (Rice).